The following is a 91-amino-acid chain: ATP synthase subunit c (91 aa).

Helical transmembrane passes span 4 to 24 (FTMCVLAAGIGMALGTLGTGI) and 53 to 73 (IGLAMIESLAIYALVVCLIIL).

The protein belongs to the ATPase C chain family. In terms of assembly, F-type ATPases have 2 components, F(1) - the catalytic core - and F(0) - the membrane proton channel. F(1) has five subunits: alpha(3), beta(3), gamma(1), delta(1), epsilon(1). F(0) has three main subunits: a(1), b(2) and c(10-14). The alpha and beta chains form an alternating ring which encloses part of the gamma chain. F(1) is attached to F(0) by a central stalk formed by the gamma and epsilon chains, while a peripheral stalk is formed by the delta and b chains.

Its subcellular location is the cell inner membrane. Its function is as follows. F(1)F(0) ATP synthase produces ATP from ADP in the presence of a proton or sodium gradient. F-type ATPases consist of two structural domains, F(1) containing the extramembraneous catalytic core and F(0) containing the membrane proton channel, linked together by a central stalk and a peripheral stalk. During catalysis, ATP synthesis in the catalytic domain of F(1) is coupled via a rotary mechanism of the central stalk subunits to proton translocation. Functionally, key component of the F(0) channel; it plays a direct role in translocation across the membrane. A homomeric c-ring of between 10-14 subunits forms the central stalk rotor element with the F(1) delta and epsilon subunits. This Geotalea daltonii (strain DSM 22248 / JCM 15807 / FRC-32) (Geobacter daltonii) protein is ATP synthase subunit c.